The chain runs to 255 residues: 3-deoxy-manno-octulosonate cytidylyltransferase (255 aa).

The protein belongs to the KdsB family.

The protein localises to the cytoplasm. It carries out the reaction 3-deoxy-alpha-D-manno-oct-2-ulosonate + CTP = CMP-3-deoxy-beta-D-manno-octulosonate + diphosphate. Its pathway is nucleotide-sugar biosynthesis; CMP-3-deoxy-D-manno-octulosonate biosynthesis; CMP-3-deoxy-D-manno-octulosonate from 3-deoxy-D-manno-octulosonate and CTP: step 1/1. It functions in the pathway bacterial outer membrane biogenesis; lipopolysaccharide biosynthesis. Activates KDO (a required 8-carbon sugar) for incorporation into bacterial lipopolysaccharide in Gram-negative bacteria. The chain is 3-deoxy-manno-octulosonate cytidylyltransferase from Cellvibrio japonicus (strain Ueda107) (Pseudomonas fluorescens subsp. cellulosa).